The chain runs to 1078 residues: DNA gyrase subunit B (1078 aa).

Residues 889 to 974 (GKILNIEKTD…QGYIYIACPP (86 aa)) form the Toprim domain. Mg(2+) is bound by residues E895, D939, and D941.

The protein belongs to the type II topoisomerase GyrB family. Heterotetramer, composed of two GyrA and two GyrB chains. In the heterotetramer, GyrA contains the active site tyrosine that forms a transient covalent intermediate with DNA, while GyrB binds cofactors and catalyzes ATP hydrolysis. Mg(2+) serves as cofactor. In terms of processing, this protein undergoes a protein self splicing that involves a post-translational excision of the intervening region (intein) followed by peptide ligation.

The protein localises to the cytoplasm. The enzyme catalyses ATP-dependent breakage, passage and rejoining of double-stranded DNA.. A type II topoisomerase that negatively supercoils closed circular double-stranded (ds) DNA in an ATP-dependent manner to modulate DNA topology and maintain chromosomes in an underwound state. Negative supercoiling favors strand separation, and DNA replication, transcription, recombination and repair, all of which involve strand separation. Also able to catalyze the interconversion of other topological isomers of dsDNA rings, including catenanes and knotted rings. Type II topoisomerases break and join 2 DNA strands simultaneously in an ATP-dependent manner. The chain is DNA gyrase subunit B (gyrB) from Synechocystis sp. (strain ATCC 27184 / PCC 6803 / Kazusa).